We begin with the raw amino-acid sequence, 1893 residues long: Protein TIC 214 (1893 aa).

6 consecutive transmembrane segments (helical) span residues Ile-18–Gly-38, Ala-63–Leu-83, Leu-87–Trp-107, Leu-127–Leu-147, Val-175–Ile-195, and Ile-224–Ile-244. Composition is skewed to basic and acidic residues over residues Met-249 to Arg-258 and Glu-268 to Glu-287. The disordered stretch occupies residues Met-249–Glu-317. The segment covering Glu-298–Glu-309 has biased composition (acidic residues). A helical membrane pass occupies residues Leu-1126–Ile-1146.

The protein belongs to the TIC214 family. Part of the Tic complex.

The protein resides in the plastid. The protein localises to the chloroplast inner membrane. Involved in protein precursor import into chloroplasts. May be part of an intermediate translocation complex acting as a protein-conducting channel at the inner envelope. This Vitis vinifera (Grape) protein is Protein TIC 214.